A 392-amino-acid chain; its full sequence is 4-hydroxy-3-methylbut-2-en-1-yl diphosphate synthase (flavodoxin) (392 aa).

Residues cysteine 280, cysteine 283, cysteine 315, and glutamate 322 each coordinate [4Fe-4S] cluster. Residues 371-380 (TEKGSDHCSE) show a composition bias toward basic and acidic residues. Positions 371 to 392 (TEKGSDHCSETTRSGSPVVTVN) are disordered. A compositionally biased stretch (polar residues) spans 381–392 (TTRSGSPVVTVN).

The protein belongs to the IspG family. It depends on [4Fe-4S] cluster as a cofactor.

It carries out the reaction (2E)-4-hydroxy-3-methylbut-2-enyl diphosphate + oxidized [flavodoxin] + H2O + 2 H(+) = 2-C-methyl-D-erythritol 2,4-cyclic diphosphate + reduced [flavodoxin]. The protein operates within isoprenoid biosynthesis; isopentenyl diphosphate biosynthesis via DXP pathway; isopentenyl diphosphate from 1-deoxy-D-xylulose 5-phosphate: step 5/6. In terms of biological role, converts 2C-methyl-D-erythritol 2,4-cyclodiphosphate (ME-2,4cPP) into 1-hydroxy-2-methyl-2-(E)-butenyl 4-diphosphate. The chain is 4-hydroxy-3-methylbut-2-en-1-yl diphosphate synthase (flavodoxin) from Mycobacterium leprae (strain Br4923).